Reading from the N-terminus, the 95-residue chain is MSVDISTVKRVAHLARIAVNDDDAERMTGELNAILGFVEQLNEVNVDGIEPMTSVTPMDMRMRQDKVTDGGIAAAVVANAPVTEDNFFVVPKVVE.

The protein belongs to the GatC family. In terms of assembly, heterotrimer of A, B and C subunits.

It catalyses the reaction L-glutamyl-tRNA(Gln) + L-glutamine + ATP + H2O = L-glutaminyl-tRNA(Gln) + L-glutamate + ADP + phosphate + H(+). It carries out the reaction L-aspartyl-tRNA(Asn) + L-glutamine + ATP + H2O = L-asparaginyl-tRNA(Asn) + L-glutamate + ADP + phosphate + 2 H(+). In terms of biological role, allows the formation of correctly charged Asn-tRNA(Asn) or Gln-tRNA(Gln) through the transamidation of misacylated Asp-tRNA(Asn) or Glu-tRNA(Gln) in organisms which lack either or both of asparaginyl-tRNA or glutaminyl-tRNA synthetases. The reaction takes place in the presence of glutamine and ATP through an activated phospho-Asp-tRNA(Asn) or phospho-Glu-tRNA(Gln). In Brucella anthropi (strain ATCC 49188 / DSM 6882 / CCUG 24695 / JCM 21032 / LMG 3331 / NBRC 15819 / NCTC 12168 / Alc 37) (Ochrobactrum anthropi), this protein is Aspartyl/glutamyl-tRNA(Asn/Gln) amidotransferase subunit C.